A 336-amino-acid chain; its full sequence is Mitochondrial thiamine diphosphate carrier 1 (336 aa).

6 consecutive transmembrane segments (helical) span residues 11 to 27, 88 to 105, 127 to 150, 182 to 199, 230 to 246, and 303 to 322; these read RRALVDSLAGAISGGIS, VPALFMYMPYTAIQFTVL, YLSYVSGAIAGCTATIGSYPFDLL, LYSGLSPTLVEIIPYAGL, SVSSFQLFLCGFAAGTF, and GLFPSLVKSAPAGAVTFVVY. Solcar repeat units lie at residues 11-111, 124-210, and 231-328; these read RRAL…LKTF, LSPY…FKRS, and VSSF…ISDW.

It belongs to the mitochondrial carrier (TC 2.A.29) family. As to expression, ubiquitous with highest expression in pollen.

Its subcellular location is the mitochondrion inner membrane. In terms of biological role, mitochondrial transporter that mediates uptake of thiamine diphosphate (ThDP) into mitochondria. The sequence is that of Mitochondrial thiamine diphosphate carrier 1 from Zea mays (Maize).